The chain runs to 249 residues: Probable calcium-binding protein CML12 (249 aa).

The span at 1–24 shows a compositional bias: basic and acidic residues; that stretch reads MQSQRERPREDRVHEETRGADHAH. The tract at residues 1 to 80 is disordered; sequence MQSQRERPRE…RKGKAPATAE (80 aa). The span at 30 to 56 shows a compositional bias: low complexity; the sequence is AAAAASATATETATRTMSLHAGGVVVV. Over residues 57-70 the composition is skewed to basic and acidic residues; that stretch reads DGKEKGKKEEGEGK. EF-hand domains are found at residues 91 to 126, 128 to 163, 171 to 206, and 207 to 242; these read EQLRQLHEIFLRFDLDGDGSLTKLELAALLRSLGLR, AAGDEIHALIAAIDADGNGTVEFDELASSLADLILG, VDQAELAEAFRAFDRDGNGFISAAELARSMARMGHP, and ICYAELTDMMREADTDGDGLISFEEFTAIMAKSALD. Residues aspartate 104, aspartate 106, aspartate 108, serine 110, glutamate 115, aspartate 141, aspartate 143, asparagine 145, threonine 147, glutamate 152, aspartate 184, aspartate 186, asparagine 188, glutamate 195, aspartate 220, aspartate 222, aspartate 224, and glutamate 231 each contribute to the Ca(2+) site.

Potential calcium sensor. In Oryza sativa subsp. japonica (Rice), this protein is Probable calcium-binding protein CML12 (CML12).